Reading from the N-terminus, the 754-residue chain is 1,4-alpha-glucan branching enzyme GlgB (754 aa).

Asp431 acts as the Nucleophile in catalysis. Glu484 serves as the catalytic Proton donor.

This sequence belongs to the glycosyl hydrolase 13 family. GlgB subfamily. As to quaternary structure, monomer.

The catalysed reaction is Transfers a segment of a (1-&gt;4)-alpha-D-glucan chain to a primary hydroxy group in a similar glucan chain.. The protein operates within glycan biosynthesis; glycogen biosynthesis. Its function is as follows. Catalyzes the formation of the alpha-1,6-glucosidic linkages in glycogen by scission of a 1,4-alpha-linked oligosaccharide from growing alpha-1,4-glucan chains and the subsequent attachment of the oligosaccharide to the alpha-1,6 position. The chain is 1,4-alpha-glucan branching enzyme GlgB from Prochlorococcus marinus (strain MIT 9215).